The chain runs to 501 residues: Aldehyde dehydrogenase 1A1 (501 aa).

At Ser-2 the chain carries N-acetylserine. Lys-91 and Lys-128 each carry N6-acetyllysine. Residues 167–170, 193–196, 226–227, and 246–247 each bind NAD(+); these read LPWN, KPAE, GP, and GS. Lys-252 is subject to N6-acetyllysine. Glu-269 acts as the Proton acceptor in catalysis. Position 269–271 (269–271) interacts with NAD(+); sequence ELG. Cys-303 serves as the catalytic Nucleophile. A mediates interaction with PRMT3 region spans residues 336 to 501; sequence LTPGVSQGPQ…VTVKISQKNS (166 aa). Thr-337 bears the Phosphothreonine mark. Residue 349–353 coordinates NAD(+); sequence EQYDK. Residues Lys-353 and Lys-367 each carry the N6-acetyllysine modification. NAD(+) is bound at residue 400 to 402; sequence EIF. Lys-410 carries the post-translational modification N6-acetyllysine. Residue Ser-413 is modified to Phosphoserine. An N6-acetyllysine mark is found at Lys-419, Lys-435, and Lys-495.

This sequence belongs to the aldehyde dehydrogenase family. Homotetramer. Interacts with PRMT3; the interaction is direct, inhibits ALDH1A1 aldehyde dehydrogenase activity and is independent of the methyltransferase activity of PRMT3. Post-translationally, the N-terminus is blocked most probably by acetylation.

The protein resides in the cytoplasm. The protein localises to the cytosol. Its subcellular location is the cell projection. It is found in the axon. It catalyses the reaction an aldehyde + NAD(+) + H2O = a carboxylate + NADH + 2 H(+). The enzyme catalyses all-trans-retinal + NAD(+) + H2O = all-trans-retinoate + NADH + 2 H(+). It carries out the reaction 9-cis-retinal + NAD(+) + H2O = 9-cis-retinoate + NADH + 2 H(+). The catalysed reaction is 11-cis-retinal + NAD(+) + H2O = 11-cis-retinoate + NADH + 2 H(+). It catalyses the reaction 13-cis-retinal + NAD(+) + H2O = 13-cis-retinoate + NADH + 2 H(+). The enzyme catalyses 3-deoxyglucosone + NAD(+) + H2O = 2-dehydro-3-deoxy-D-gluconate + NADH + 2 H(+). It carries out the reaction (E)-4-hydroxynon-2-enal + NAD(+) + H2O = (E)-4-hydroxynon-2-enoate + NADH + 2 H(+). The catalysed reaction is malonaldehyde + NAD(+) + H2O = 3-oxopropanoate + NADH + 2 H(+). It catalyses the reaction hexanal + NAD(+) + H2O = hexanoate + NADH + 2 H(+). The enzyme catalyses propanal + NAD(+) + H2O = propanoate + NADH + 2 H(+). It carries out the reaction acetaldehyde + NAD(+) + H2O = acetate + NADH + 2 H(+). The catalysed reaction is benzaldehyde + NAD(+) + H2O = benzoate + NADH + 2 H(+). It catalyses the reaction 4-aminobutanal + NAD(+) + H2O = 4-aminobutanoate + NADH + 2 H(+). Its pathway is cofactor metabolism; retinol metabolism. Functionally, cytosolic dehydrogenase that catalyzes the irreversible oxidation of a wide range of aldehydes to their corresponding carboxylic acid. Functions downstream of retinol dehydrogenases and catalyzes the oxidation of retinaldehyde into retinoic acid, the second step in the oxidation of retinol/vitamin A into retinoic acid. This pathway is crucial to control the levels of retinol and retinoic acid, two important molecules which excess can be teratogenic and cytotoxic. Also oxidizes aldehydes resulting from lipid peroxidation like (E)-4-hydroxynon-2-enal/HNE, malonaldehyde and hexanal that form protein adducts and are highly cytotoxic. By participating for instance to the clearance of (E)-4-hydroxynon-2-enal/HNE in the lens epithelium prevents the formation of HNE-protein adducts and lens opacification. Also functions downstream of fructosamine-3-kinase in the fructosamine degradation pathway by catalyzing the oxidation of 3-deoxyglucosone, the carbohydrate product of fructosamine 3-phosphate decomposition, which is itself a potent glycating agent that may react with lysine and arginine side-chains of proteins. Also has an aminobutyraldehyde dehydrogenase activity and is probably part of an alternative pathway for the biosynthesis of GABA/4-aminobutanoate in midbrain, thereby playing a role in GABAergic synaptic transmission. This is Aldehyde dehydrogenase 1A1 from Equus caballus (Horse).